The sequence spans 515 residues: Monocarboxylate transporter 10 (515 aa).

Residues 1 to 48 (MVLSQEEPDSARGTSEAQPLGPAPTGAAPPPGPGPSDSPEAAVEKVEV) form a disordered region. Over 1–66 (MVLSQEEPDS…EPHEPPEPPE (66 aa)) the chain is Cytoplasmic. Residues 17–26 (AQPLGPAPTG) are compositionally biased toward low complexity. The segment covering 27–36 (AAPPPGPGPS) has biased composition (pro residues). The chain crosses the membrane as a helical span at residues 67–87 (GGWGWLVMLAAMWCNGSVFGI). Residues 88–114 (QNACGVLFVSMLETFGSKDDDKMVFKT) are Extracellular-facing. A helical membrane pass occupies residues 115–135 (AWVGSLSMGMIFFCCPIVSVF). Topologically, residues 136-144 (TDLFGCRKT) are cytoplasmic. The helical transmembrane segment at 145 to 165 (AVVGAAVGFVGLMSSSFVSSI) threads the bilayer. Residues 166 to 171 (EPLYLT) are Extracellular-facing. A helical membrane pass occupies residues 172 to 192 (YGIIFACGCSFAYQPSLVILG). Residues 193–200 (HYFKKRLG) are Cytoplasmic-facing. Residues 201–221 (LVNGIVTAGSSVFTILLPLLL) traverse the membrane as a helical segment. Residues 222–228 (RVLIDSV) lie on the Extracellular side of the membrane. The chain crosses the membrane as a helical span at residues 229–249 (GLFYTLRVLCIFMFVLFLAGF). Residues 250–291 (TYRPLATSTKDKESGGSGSSLFSRKKFSPPKKIFNFAIFKVT) lie on the Cytoplasmic side of the membrane. Serine 263 is subject to Phosphoserine. A helical transmembrane segment spans residues 292-312 (AYAVWAVGIPLALFGYFVPYV). Residues 313–329 (HLMKHVNERFQDEKNKE) are Extracellular-facing. The chain crosses the membrane as a helical span at residues 330-350 (VVLMCIGVTSGVGRLLFGRIA). Residue aspartate 351 is a topological domain, cytoplasmic. Residues 352 to 372 (YVPGVKKVYLQVLSFFFIGLM) form a helical membrane-spanning segment. Topologically, residues 373 to 396 (SMMIPLCSIFGALIAVCLIMGLFD) are extracellular. Residues 397–417 (GCFISIMAPIAFELVGAQDVS) form a helical membrane-spanning segment. The Cytoplasmic portion of the chain corresponds to 418–419 (QA). Residues 420–440 (IGFLLGFMSIPMTVGPPIAGL) form a helical membrane-spanning segment. Residues 441–451 (LRDKLGSYDVA) lie on the Extracellular side of the membrane. The helical transmembrane segment at 452 to 472 (FYLAGVPPLIGGAVLCFIPWI) threads the bilayer. At 473 to 515 (HSKKQREISKTTGKEKMEKMLENQNSLLSSSSGMFKKESDSII) the chain is on the cytoplasmic side. Residues serine 498, serine 501, serine 503, and serine 504 each carry the phosphoserine modification.

The protein belongs to the major facilitator superfamily. Monocarboxylate porter (TC 2.A.1.13) family. In terms of processing, not N-glycosylated. Strongly expressed in kidney and skeletal muscle and at lower level in placenta and heart.

It localises to the cell membrane. The protein localises to the basolateral cell membrane. The catalysed reaction is 3,3',5-triiodo-L-thyronine(out) = 3,3',5-triiodo-L-thyronine(in). It carries out the reaction L-thyroxine(out) = L-thyroxine(in). It catalyses the reaction L-tryptophan(in) = L-tryptophan(out). The enzyme catalyses L-tyrosine(in) = L-tyrosine(out). The catalysed reaction is L-phenylalanine(in) = L-phenylalanine(out). Its function is as follows. Sodium- and proton-independent thyroid hormones and aromatic acids transporter. Mediates both uptake and efflux of 3,5,3'-triiodothyronine (T3) and 3,5,3',5'-tetraiodothyronine (T4) with high affinity, suggesting a role in the homeostasis of thyroid hormone levels. Responsible for low affinity bidirectional transport of the aromatic amino acids, such as phenylalanine, tyrosine, tryptophan and L-3,4-dihydroxyphenylalanine (L-dopa). Plays an important role in homeostasis of aromatic amino acids. In Homo sapiens (Human), this protein is Monocarboxylate transporter 10 (SLC16A10).